Consider the following 210-residue polypeptide: Small ribosomal subunit protein uS4 (210 aa).

The disordered stretch occupies residues glutamate 30 to glycine 49. The S4 RNA-binding domain occupies arginine 99 to isoleucine 162.

It belongs to the universal ribosomal protein uS4 family. Part of the 30S ribosomal subunit. Contacts protein S5. The interaction surface between S4 and S5 is involved in control of translational fidelity.

One of the primary rRNA binding proteins, it binds directly to 16S rRNA where it nucleates assembly of the body of the 30S subunit. Functionally, with S5 and S12 plays an important role in translational accuracy. The polypeptide is Small ribosomal subunit protein uS4 (Leptospira biflexa serovar Patoc (strain Patoc 1 / Ames)).